The primary structure comprises 318 residues: Acetyl-coenzyme A carboxylase carboxyl transferase subunit alpha (318 aa).

Residues 39-292 (LTDKSEKQLR…GDSIAAELPD (254 aa)) enclose the CoA carboxyltransferase C-terminal domain.

Belongs to the AccA family. Acetyl-CoA carboxylase is a heterohexamer composed of biotin carboxyl carrier protein (AccB), biotin carboxylase (AccC) and two subunits each of ACCase subunit alpha (AccA) and ACCase subunit beta (AccD).

It is found in the cytoplasm. The catalysed reaction is N(6)-carboxybiotinyl-L-lysyl-[protein] + acetyl-CoA = N(6)-biotinyl-L-lysyl-[protein] + malonyl-CoA. It participates in lipid metabolism; malonyl-CoA biosynthesis; malonyl-CoA from acetyl-CoA: step 1/1. In terms of biological role, component of the acetyl coenzyme A carboxylase (ACC) complex. First, biotin carboxylase catalyzes the carboxylation of biotin on its carrier protein (BCCP) and then the CO(2) group is transferred by the carboxyltransferase to acetyl-CoA to form malonyl-CoA. The protein is Acetyl-coenzyme A carboxylase carboxyl transferase subunit alpha of Gluconacetobacter diazotrophicus (strain ATCC 49037 / DSM 5601 / CCUG 37298 / CIP 103539 / LMG 7603 / PAl5).